A 365-amino-acid polypeptide reads, in one-letter code: Forkhead box protein H1 (365 aa).

The tract at residues 1–29 is disordered; sequence MGPCSGSRLGPPEAESPSQPPKRRKKRYL. The segment at residues 32-128 is a DNA-binding region (fork-head); it reads DKPPYTYLAM…ALRLQNTALC (97 aa). A disordered region spans residues 151–215; it reads GRPYRPPSPP…TPPLPSSERP (65 aa). Residues 154–164 show a composition bias toward pro residues; the sequence is YRPPSPPPPPS. An SMAD-interaction domain (SID) region spans residues 273–354; the sequence is LWGQLPTSYL…VSHPRDLAAP (82 aa). Positions 277 to 281 match the Fast/FoxH1 motif 1 (FM1) motif; sequence LPTSY. Residues 287 to 293 carry the Fast/FoxH1 motif 2 (FM2) motif; that stretch reads PNVVMPL. The short motif at 327–348 is the SMAD interaction motif (SIM) element; it reads LDALFQGVPPNKSIYDVWVSHP.

Interacts with the MH2 domains of SMAD2 and SMAD3. Ubiquitous.

It localises to the nucleus. Transcriptional activator. Recognizes and binds to the DNA sequence 5'-TGT[GT][GT]ATT-3'. Required for induction of the goosecoid (GSC) promoter by TGF-beta or activin signaling. Forms a transcriptionally active complex containing FOXH1/SMAD2/SMAD4 on a site on the GSC promoter called TARE (TGF-beta/activin response element). In Homo sapiens (Human), this protein is Forkhead box protein H1 (FOXH1).